A 354-amino-acid chain; its full sequence is MAFPLQKTFLCSNGQSFPCSNGRSTSTLLASDLKFQRLNKPFILRVGSMQIRNSPKEHPRVSSAAVLPPVPRSIHDIPNGDHILGFGANLAEDHPGYHDEEYKRRRSCIADLAKKHKIGEPIPEINYTTEEAHVWAEVLTKLSELYPSHACKEYLESFPLFNFSPNKIPQLEELSQILQHYTGWKIRPVAGLLHPRQFLNGLAFKTFHSTQYIRHTSNPMYTPEPDICHEILGHMPMLVHPEFADLAQVIGLASLGASDKEIWHLTKLYWYTVEFGTIEENKEVKAFGAGILSSFGELQHMKSSKPTFQKLDPFAQLPKMSYKDGFQNMYFLCQSFSDTTEKLRSYARTIHSGN.

The transit peptide at M1–R60 directs the protein to the chloroplast. Residues H229, H234, and E274 each contribute to the Fe cation site.

The protein belongs to the biopterin-dependent aromatic amino acid hydroxylase family. Forms monomers. The cofactor is Fe(2+).

It is found in the plastid. The protein localises to the chloroplast. It catalyses the reaction (6R)-L-erythro-5,6,7,8-tetrahydrobiopterin + L-phenylalanine + O2 = (4aS,6R)-4a-hydroxy-L-erythro-5,6,7,8-tetrahydrobiopterin + L-tyrosine. In terms of biological role, catalyzes the hydroxylation of L-phenylalanine to L-tyrosine. Does not seem to be tetrahydropterin-dependent and shows preference for 10-formyltetrahydrofolate as cosubstrate and electron donor. The protein is Phenylalanine 4-monooxygenase, chloroplastic of Pinus taeda (Loblolly pine).